A 502-amino-acid polypeptide reads, in one-letter code: Probable cytosol aminopeptidase (502 aa).

Mn(2+) is bound by residues Lys269 and Asp274. Lys281 is a catalytic residue. Mn(2+) is bound by residues Asp292, Asp351, and Glu353. Arg355 is an active-site residue.

It belongs to the peptidase M17 family. The cofactor is Mn(2+).

It is found in the cytoplasm. The enzyme catalyses Release of an N-terminal amino acid, Xaa-|-Yaa-, in which Xaa is preferably Leu, but may be other amino acids including Pro although not Arg or Lys, and Yaa may be Pro. Amino acid amides and methyl esters are also readily hydrolyzed, but rates on arylamides are exceedingly low.. It carries out the reaction Release of an N-terminal amino acid, preferentially leucine, but not glutamic or aspartic acids.. In terms of biological role, presumably involved in the processing and regular turnover of intracellular proteins. Catalyzes the removal of unsubstituted N-terminal amino acids from various peptides. This Shewanella denitrificans (strain OS217 / ATCC BAA-1090 / DSM 15013) protein is Probable cytosol aminopeptidase.